Reading from the N-terminus, the 706-residue chain is Glycine--tRNA ligase beta subunit (706 aa).

It belongs to the class-II aminoacyl-tRNA synthetase family. Tetramer of two alpha and two beta subunits.

It is found in the cytoplasm. The enzyme catalyses tRNA(Gly) + glycine + ATP = glycyl-tRNA(Gly) + AMP + diphosphate. This Hyphomonas neptunium (strain ATCC 15444) protein is Glycine--tRNA ligase beta subunit.